The chain runs to 247 residues: Small ribosomal subunit protein eS6 (247 aa).

Residues 194–247 are disordered; sequence ALKKKRVTKKREDHAEYTKLLAQRMKEAKERKMERKRSNSRSKGDSIRESTSKK. Residues 217–247 show a composition bias toward basic and acidic residues; the sequence is RMKEAKERKMERKRSNSRSKGDSIRESTSKK.

It belongs to the eukaryotic ribosomal protein eS6 family. In terms of processing, ribosomal protein S6 is the major substrate of protein kinases in eukaryote ribosomes.

In terms of biological role, component of the 40S small ribosomal subunit. Plays an important role in controlling cell growth and proliferation through the selective translation of particular classes of mRNA. The protein is Small ribosomal subunit protein eS6 (RPS6) of Aplysia californica (California sea hare).